Reading from the N-terminus, the 259-residue chain is Deoxyribose-phosphate aldolase (259 aa).

Aspartate 102 serves as the catalytic Proton donor/acceptor. Catalysis depends on lysine 167, which acts as the Schiff-base intermediate with acetaldehyde. Lysine 201 acts as the Proton donor/acceptor in catalysis.

It belongs to the DeoC/FbaB aldolase family. DeoC type 2 subfamily.

The protein resides in the cytoplasm. It carries out the reaction 2-deoxy-D-ribose 5-phosphate = D-glyceraldehyde 3-phosphate + acetaldehyde. It functions in the pathway carbohydrate degradation; 2-deoxy-D-ribose 1-phosphate degradation; D-glyceraldehyde 3-phosphate and acetaldehyde from 2-deoxy-alpha-D-ribose 1-phosphate: step 2/2. Catalyzes a reversible aldol reaction between acetaldehyde and D-glyceraldehyde 3-phosphate to generate 2-deoxy-D-ribose 5-phosphate. The chain is Deoxyribose-phosphate aldolase from Klebsiella pneumoniae (strain 342).